Here is a 509-residue protein sequence, read N- to C-terminus: ATP synthase subunit alpha (509 aa).

169 to 176 is an ATP binding site; sequence GDRQTGKT.

It belongs to the ATPase alpha/beta chains family. As to quaternary structure, F-type ATPases have 2 components, CF(1) - the catalytic core - and CF(0) - the membrane proton channel. CF(1) has five subunits: alpha(3), beta(3), gamma(1), delta(1), epsilon(1). CF(0) has three main subunits: a(1), b(2) and c(9-12). The alpha and beta chains form an alternating ring which encloses part of the gamma chain. CF(1) is attached to CF(0) by a central stalk formed by the gamma and epsilon chains, while a peripheral stalk is formed by the delta and b chains.

The protein localises to the cell inner membrane. The catalysed reaction is ATP + H2O + 4 H(+)(in) = ADP + phosphate + 5 H(+)(out). Functionally, produces ATP from ADP in the presence of a proton gradient across the membrane. The alpha chain is a regulatory subunit. The sequence is that of ATP synthase subunit alpha from Rhizobium etli (strain ATCC 51251 / DSM 11541 / JCM 21823 / NBRC 15573 / CFN 42).